A 242-amino-acid polypeptide reads, in one-letter code: Large ribosomal subunit protein uL1 (242 aa).

Belongs to the universal ribosomal protein uL1 family. Part of the 50S ribosomal subunit.

Binds directly to 23S rRNA. The L1 stalk is quite mobile in the ribosome, and is involved in E site tRNA release. In terms of biological role, protein L1 is also a translational repressor protein, it controls the translation of the L11 operon by binding to its mRNA. This is Large ribosomal subunit protein uL1 from Kitasatospora aureofaciens (Streptomyces aureofaciens).